We begin with the raw amino-acid sequence, 2035 residues long: Ral GTPase-activating protein subunit alpha-1 (2035 aa).

A disordered region spans residues 343 to 384 (LVSREESKNDTVDKADKTAEPEQSHSNTSTLTEREPSSSSLC). Basic and acidic residues predominate over residues 345 to 365 (SREESKNDTVDKADKTAEPEQ). A compositionally biased stretch (polar residues) spans 366-384 (SHSNTSTLTEREPSSSSLC). 2 positions are modified to phosphoserine: S710 and S720. Residues 714 to 754 (SFSRGWSRDQPGQAPMRQRSATTTGSPGTEKARSIVRQKTV) are disordered. Position 753 is a phosphothreonine (T753). A Phosphoserine modification is found at S772. T777 bears the Phosphothreonine mark. Residue S796 is modified to Phosphoserine. A compositionally biased stretch (basic and acidic residues) spans 807 to 817 (ERAKVNKEDTS). 2 disordered regions span residues 807–834 (ERAK…SANV) and 848–911 (SGNA…SHSD). Polar residues-rich tracts occupy residues 824–833 (NSETGGSSAN) and 849–862 (GNAS…SSPG). Phosphoserine is present on residues S859, S860, and S863. Residues 894–911 (SPASAGSSDLMSSDSHSD) show a composition bias toward low complexity. Residues S985, S989, S993, and S999 each carry the phosphoserine modification. The disordered stretch occupies residues 986-1008 (ESASPVHSALGSRSQTPSPSTLN). T1001 bears the Phosphothreonine mark. A phosphoserine mark is found at S1003 and S1477. The segment at 1326–2034 (FTNKTVAHVA…PYHHFPADAD (709 aa)) is minimal domain that binds to TCF3/E12. Residues 1713 to 1746 (SEKQENDVINAILKQYTEEKEFVEKHFNDLNMKA) are a coiled coil. One can recognise a Rap-GAP domain in the interval 1795–2003 (LRNLDSRQCR…EERARYLQTI (209 aa)).

In terms of assembly, component of the heterodimeric RalGAP1 complex with RALGAPB. Heterodimerization is required for activity. Interacts with the HLH region of TCF3/isoform E12. In terms of tissue distribution, highly expressed in brain, thymus and testis with lower levels in lung and spleen and barely detectable in heart or liver (at protein level).

The protein resides in the cytoplasm. Its subcellular location is the nucleus. In terms of biological role, catalytic subunit of the heterodimeric RalGAP1 complex which acts as a GTPase activator for the Ras-like small GTPases RALA and RALB. This chain is Ral GTPase-activating protein subunit alpha-1 (Ralgapa1), found in Rattus norvegicus (Rat).